The following is a 303-amino-acid chain: Glycine--tRNA ligase alpha subunit (303 aa).

It belongs to the class-II aminoacyl-tRNA synthetase family. As to quaternary structure, tetramer of two alpha and two beta subunits.

The protein resides in the cytoplasm. It catalyses the reaction tRNA(Gly) + glycine + ATP = glycyl-tRNA(Gly) + AMP + diphosphate. This is Glycine--tRNA ligase alpha subunit (glyQ) from Escherichia coli (strain K12).